The primary structure comprises 437 residues: ATP-dependent protease ATPase subunit HslU (437 aa).

Residues valine 18, 60 to 65 (GVGKTE), aspartate 250, glutamate 315, and arginine 387 contribute to the ATP site.

It belongs to the ClpX chaperone family. HslU subfamily. As to quaternary structure, a double ring-shaped homohexamer of HslV is capped on each side by a ring-shaped HslU homohexamer. The assembly of the HslU/HslV complex is dependent on binding of ATP.

The protein localises to the cytoplasm. Its function is as follows. ATPase subunit of a proteasome-like degradation complex; this subunit has chaperone activity. The binding of ATP and its subsequent hydrolysis by HslU are essential for unfolding of protein substrates subsequently hydrolyzed by HslV. HslU recognizes the N-terminal part of its protein substrates and unfolds these before they are guided to HslV for hydrolysis. In Desulfovibrio desulfuricans (strain ATCC 27774 / DSM 6949 / MB), this protein is ATP-dependent protease ATPase subunit HslU.